Consider the following 3589-residue polypeptide: D-lysergyl-peptide-synthetase subunit 1 (3589 aa).

The segment at Asn344–Val742 is adenylation (A) domain 1. Positions Val883–Ser952 constitute a Carrier 1 domain. Ser915 is subject to O-(pantetheine 4'-phosphoryl)serine. Residues Glu995–Ile1380 are condensation (C) domain 1. The tract at residues Gln1424–Arg1826 is adenylation (A) domain 2. Positions Leu1974–Val2042 constitute a Carrier 2 domain. O-(pantetheine 4'-phosphoryl)serine is present on Ser2006. The segment at Val2087–Ser2509 is condensation (C) domain 2. Residues Cys2534 to Arg2929 form an adenylation (A) domain 3 region. A Carrier 3 domain is found at Leu3064–Asn3132. The residue at position 3096 (Ser3096) is an O-(pantetheine 4'-phosphoryl)serine. Residues Thr3187–Leu3585 are cyclization (Cyc) domain.

It belongs to the NRP synthetase family.

Its pathway is alkaloid biosynthesis; ergot alkaloid biosynthesis. Functionally, D-lysergyl-peptide-synthetase subunit 1; part of the gene cluster that mediates the biosynthesis of fungal ergot alkaloid ergovaline, the predominant ergopeptine product in E.festucae var. lolii. DmaW catalyzes the first step of ergot alkaloid biosynthesis by condensing dimethylallyl diphosphate (DMAP) and tryptophan to form 4-dimethylallyl-L-tryptophan. The second step is catalyzed by the methyltransferase easF that methylates 4-dimethylallyl-L-tryptophan in the presence of S-adenosyl-L-methionine, resulting in the formation of 4-dimethylallyl-L-abrine. The catalase easC and the FAD-dependent oxidoreductase easE then transform 4-dimethylallyl-L-abrine to chanoclavine-I which is further oxidized by easD in the presence of NAD(+), resulting in the formation of chanoclavine-I aldehyde. Agroclavine dehydrogenase easG then mediates the conversion of chanoclavine-I aldehyde to agroclavine via a non-enzymatic adduct reaction: the substrate is an iminium intermediate that is formed spontaneously from chanoclavine-I aldehyde in the presence of glutathione. The presence of easA is not required to complete this reaction. Further conversion of agroclavine to paspalic acid is a two-step process involving oxidation of agroclavine to elymoclavine and of elymoclavine to paspalic acid, the second step being performed by the elymoclavine oxidase cloA. Paspalic acid is then further converted to D-lysergic acid. Ergovaline is assembled from D-lysergic acid and three different amino acids by the D-lysergyl-peptide-synthetase composed of a monomudular (lpsB) and a trimodular (lpsA) nonribosomal peptide synthetase subunit. The polypeptide is D-lysergyl-peptide-synthetase subunit 1 (Epichloe festucae var. lolii (Neotyphodium lolii)).